Here is a 222-residue protein sequence, read N- to C-terminus: Methylthioribulose-1-phosphate dehydratase (222 aa).

The Zn(2+) site is built by H94 and H96.

The protein belongs to the aldolase class II family. MtnB subfamily. Zn(2+) serves as cofactor.

The enzyme catalyses 5-(methylsulfanyl)-D-ribulose 1-phosphate = 5-methylsulfanyl-2,3-dioxopentyl phosphate + H2O. It participates in amino-acid biosynthesis; L-methionine biosynthesis via salvage pathway; L-methionine from S-methyl-5-thio-alpha-D-ribose 1-phosphate: step 2/6. Catalyzes the dehydration of methylthioribulose-1-phosphate (MTRu-1-P) into 2,3-diketo-5-methylthiopentyl-1-phosphate (DK-MTP-1-P). The protein is Methylthioribulose-1-phosphate dehydratase of Yersinia pseudotuberculosis serotype O:1b (strain IP 31758).